Consider the following 165-residue polypeptide: Nucleotide-binding protein RoseRS_0530 (165 aa).

The protein belongs to the YajQ family.

Its function is as follows. Nucleotide-binding protein. In Roseiflexus sp. (strain RS-1), this protein is Nucleotide-binding protein RoseRS_0530.